The following is a 132-amino-acid chain: Small ribosomal subunit protein uS15 (132 aa).

This sequence belongs to the universal ribosomal protein uS15 family. Part of the 30S ribosomal subunit.

The chain is Small ribosomal subunit protein uS15 from Methanobrevibacter smithii (strain ATCC 35061 / DSM 861 / OCM 144 / PS).